We begin with the raw amino-acid sequence, 352 residues long: Ion-translocating oxidoreductase complex subunit D (352 aa).

5 consecutive transmembrane segments (helical) span residues 20-40, 42-62, 78-109, 123-143, and 148-168; these read IMLL…WFFG, GTLV…ALVL, ALLT…VIIA, PAMI…TSWL, and IAVN…GHTA. At Thr187 the chain carries FMN phosphoryl threonine. 5 helical membrane passes run 214 to 234, 242 to 262, 267 to 287, 301 to 321, and 322 to 342; these read ILAG…GVWL, WHIP…GWLF, LAAP…FFIL, LIFG…GGYP, and DGVA…DYYT.

This sequence belongs to the NqrB/RnfD family. The complex is composed of six subunits: RsxA, RsxB, RsxC, RsxD, RsxE and RsxG. FMN is required as a cofactor.

It localises to the cell inner membrane. Functionally, part of a membrane-bound complex that couples electron transfer with translocation of ions across the membrane. Required to maintain the reduced state of SoxR. This chain is Ion-translocating oxidoreductase complex subunit D, found in Escherichia coli O6:H1 (strain CFT073 / ATCC 700928 / UPEC).